The sequence spans 434 residues: Methylenetetrahydrofolate--tRNA-(uracil-5-)-methyltransferase TrmFO (434 aa).

10-15 (GAGLAG) provides a ligand contact to FAD.

It belongs to the MnmG family. TrmFO subfamily. The cofactor is FAD.

The protein resides in the cytoplasm. It catalyses the reaction uridine(54) in tRNA + (6R)-5,10-methylene-5,6,7,8-tetrahydrofolate + NADH + H(+) = 5-methyluridine(54) in tRNA + (6S)-5,6,7,8-tetrahydrofolate + NAD(+). It carries out the reaction uridine(54) in tRNA + (6R)-5,10-methylene-5,6,7,8-tetrahydrofolate + NADPH + H(+) = 5-methyluridine(54) in tRNA + (6S)-5,6,7,8-tetrahydrofolate + NADP(+). Functionally, catalyzes the folate-dependent formation of 5-methyl-uridine at position 54 (M-5-U54) in all tRNAs. The polypeptide is Methylenetetrahydrofolate--tRNA-(uracil-5-)-methyltransferase TrmFO (Bacillus cereus (strain ATCC 14579 / DSM 31 / CCUG 7414 / JCM 2152 / NBRC 15305 / NCIMB 9373 / NCTC 2599 / NRRL B-3711)).